Reading from the N-terminus, the 162-residue chain is Corticoliberin-2 (162 aa).

The N-terminal stretch at M1–A24 is a signal peptide. A propeptide spanning residues I25–R119 is cleaved from the precursor. The segment at L57 to S79 is disordered. F160 bears the Phenylalanine amide mark.

It belongs to the sauvagine/corticotropin-releasing factor/urotensin I family.

The protein localises to the secreted. In terms of biological role, this hormone from hypothalamus regulates the release of corticotropin from pituitary gland. This chain is Corticoliberin-2 (crf2), found in Catostomus commersonii (White sucker).